The chain runs to 156 residues: Small ribosomal subunit protein uS7 (156 aa).

It belongs to the universal ribosomal protein uS7 family. As to quaternary structure, part of the 30S ribosomal subunit. Contacts proteins S9 and S11.

Its function is as follows. One of the primary rRNA binding proteins, it binds directly to 16S rRNA where it nucleates assembly of the head domain of the 30S subunit. Is located at the subunit interface close to the decoding center, probably blocks exit of the E-site tRNA. In Brucella melitensis biotype 1 (strain ATCC 23456 / CCUG 17765 / NCTC 10094 / 16M), this protein is Small ribosomal subunit protein uS7.